Consider the following 142-residue polypeptide: DNA-directed RNA polymerases I, II, and III subunit rpabc3 (142 aa).

The non-specific ssDNA binding stretch occupies residues 16–40; it reads DPDGKKFDRVSRFVCYSENYEMDLQ.

The protein belongs to the eukaryotic RPB8 RNA polymerase subunit family. In terms of assembly, component of the RNA polymerase I (Pol I), RNA polymerase II (Pol II) and RNA polymerase III (Pol III) complexes consisting of at least 13, 12 and 17 subunits, respectively. Directly interacts with POLR2A.

It is found in the nucleus. The protein localises to the nucleolus. Functionally, DNA-dependent RNA polymerase catalyzes the transcription of DNA into RNA using the four ribonucleoside triphosphates as substrates. Common component of RNA polymerases I, II and III which synthesize ribosomal RNA precursors, mRNA precursors and many functional non-coding RNAs, and small RNAs, such as 5S rRNA and tRNAs, respectively. In Dictyostelium discoideum (Social amoeba), this protein is DNA-directed RNA polymerases I, II, and III subunit rpabc3 (polr2h).